A 379-amino-acid chain; its full sequence is Cytochrome b (379 aa).

A run of 4 helical transmembrane segments spans residues 33-53 (FGSLLGMCLVIQILTGLFLAM), 77-98 (WLIRYLHANGASMFFICLFIHV), 113-133 (WNIGIILLLTTMATAFVGYVL), and 178-198 (FFAFHFILPFIITALVLVHLL). 2 residues coordinate heme b: histidine 83 and histidine 97. Heme b-binding residues include histidine 182 and histidine 196. An a ubiquinone-binding site is contributed by histidine 201. 4 helical membrane passes run 226 to 246 (IKDLLGIFLLLMTLMILALFF), 288 to 308 (LGGVLALVLSILILATFPLLN), 320 to 340 (ITQTIYWIFIANLLVLTWIGG), and 347 to 367 (FTTIGQIASITYFTIIVIIMP).

The protein belongs to the cytochrome b family. As to quaternary structure, the cytochrome bc1 complex contains 11 subunits: 3 respiratory subunits (MT-CYB, CYC1 and UQCRFS1), 2 core proteins (UQCRC1 and UQCRC2) and 6 low-molecular weight proteins (UQCRH/QCR6, UQCRB/QCR7, UQCRQ/QCR8, UQCR10/QCR9, UQCR11/QCR10 and a cleavage product of UQCRFS1). This cytochrome bc1 complex then forms a dimer. Heme b is required as a cofactor.

It is found in the mitochondrion inner membrane. Its function is as follows. Component of the ubiquinol-cytochrome c reductase complex (complex III or cytochrome b-c1 complex) that is part of the mitochondrial respiratory chain. The b-c1 complex mediates electron transfer from ubiquinol to cytochrome c. Contributes to the generation of a proton gradient across the mitochondrial membrane that is then used for ATP synthesis. The protein is Cytochrome b (MT-CYB) of Deltamys kempi (Kemp's grass mouse).